A 312-amino-acid polypeptide reads, in one-letter code: G-protein coupled receptor BILF1 (312 aa).

Topologically, residues 1 to 40 are extracellular; it reads MLSTMAPGSTVGTLVANMTSVNATEDACTKSYSAFLSGMT. 2 cysteine pairs are disulfide-bonded: cysteine 28/cysteine 258 and cysteine 97/cysteine 174. Residues 41–61 form a helical membrane-spanning segment; it reads SLLLVLLILLTLAGILFIIFV. Residues 62 to 67 lie on the Cytoplasmic side of the membrane; the sequence is RKLVHR. The chain crosses the membrane as a helical span at residues 68–88; that stretch reads MDVWLIALLIELLLWVLGKMI. At 89–95 the chain is on the extracellular side; that stretch reads QEFSSTG. A helical membrane pass occupies residues 96–116; that stretch reads LCLLTQNMMFLGLMCSVWTHL. Residues 117–138 lie on the Cytoplasmic side of the membrane; the sequence is GMALEKTLALFSRTPKRTSHRN. The helical transmembrane segment at 139-159 threads the bilayer; sequence VCLYLMGVFCLVLLLIIILLI. Topologically, residues 160 to 192 are extracellular; it reads TMGPDANLNRGPNMCREGPTKGMHTAVQGLKAG. A helical transmembrane segment spans residues 193–213; sequence CYLLAAVLIVLLTVIIIWKLL. Residues 214–228 are Cytoplasmic-facing; it reads RTKFGRKPRLICNVT. The helical transmembrane segment at 229–249 threads the bilayer; sequence FTGLICAFSWFMLSLPLLFLG. Residues 250 to 269 lie on the Extracellular side of the membrane; sequence EAGSLGFDCTESLVARYYPG. The chain crosses the membrane as a helical span at residues 270-290; it reads PAACLALLLIILYAWSFSHFM. Over 291–312 the chain is Cytoplasmic; the sequence is DSLKNQVTVTARYFRRVPSQST.

The protein belongs to the Epstein-Barr virus BILF1 protein family. In terms of assembly, interacts with host CXCR4 to form higher-order heterooligomers. Interacts with host Gi heterotrimer.

It localises to the host cell membrane. It is found in the host mitochondrion outer membrane. In terms of biological role, constitutively active, ligand-independent G protein-coupled receptor that has immunoevasive and oncogenic activities. Couples with the host inhibitory G protein (Gi) in order to disrupt the host chemokine signaling. As a consequence of its constitutive activity, mediates host CXCR4 inhibition. Enhances degradation of host major histocompatibility complex class I antigens via lysosomes, thereby modulating the antigen presentation to cytotoxic T cells. Targets selectively HLA-A, HLA-Band HLA-E molecules. Targets also newly synthesized MHC-I/peptide complexes en route to the host cell surface. Inhibits the host EIF2AK2/PKR phosphorylation. Displays tranforming activity. Utilizes its C-terminal tail to trigger host MAVS UFMylation via PARK2, resulting in selective MAVS removal from mitochondrial membranes and routing to lysosomes to prevent viral activation of the NLRP3 inflammasome. The protein is G-protein coupled receptor BILF1 of Homo sapiens (Human).